A 469-amino-acid chain; its full sequence is UDP-N-acetylmuramate--L-alanine ligase (469 aa).

Residue 122–128 participates in ATP binding; sequence GTHGKTT.

Belongs to the MurCDEF family.

It localises to the cytoplasm. The catalysed reaction is UDP-N-acetyl-alpha-D-muramate + L-alanine + ATP = UDP-N-acetyl-alpha-D-muramoyl-L-alanine + ADP + phosphate + H(+). It participates in cell wall biogenesis; peptidoglycan biosynthesis. Its function is as follows. Cell wall formation. This is UDP-N-acetylmuramate--L-alanine ligase from Legionella pneumophila (strain Lens).